A 124-amino-acid polypeptide reads, in one-letter code: NAD(P)H-quinone oxidoreductase subunit 5, chloroplastic (124 aa).

Helical transmembrane passes span 22–42 (TPIS…FLVA), 44–64 (LLPL…IGII), and 91–111 (LGYM…FHLI).

Belongs to the complex I subunit 5 family. As to quaternary structure, NDH is composed of at least 16 different subunits, 5 of which are encoded in the nucleus.

It is found in the plastid. The protein resides in the chloroplast thylakoid membrane. The catalysed reaction is a plastoquinone + NADH + (n+1) H(+)(in) = a plastoquinol + NAD(+) + n H(+)(out). It carries out the reaction a plastoquinone + NADPH + (n+1) H(+)(in) = a plastoquinol + NADP(+) + n H(+)(out). Functionally, NDH shuttles electrons from NAD(P)H:plastoquinone, via FMN and iron-sulfur (Fe-S) centers, to quinones in the photosynthetic chain and possibly in a chloroplast respiratory chain. The immediate electron acceptor for the enzyme in this species is believed to be plastoquinone. Couples the redox reaction to proton translocation, and thus conserves the redox energy in a proton gradient. The protein is NAD(P)H-quinone oxidoreductase subunit 5, chloroplastic (ndhF) of Pisum sativum (Garden pea).